The sequence spans 541 residues: Membrane protein insertase YidC (541 aa).

The chain crosses the membrane as a helical span at residues 6 to 26 (SLLVLALIFISFLVYQQWQLD). The interval 34 to 56 (EQTTSITATSDVPASSPSNSQAI) is disordered. The next 4 membrane-spanning stretches (helical) occupy residues 337-357 (FWLL…IICV), 416-436 (LGGC…YWTF), 454-474 (LSAQ…MFLL), and 495-515 (PLVF…YWLV).

It belongs to the OXA1/ALB3/YidC family. Type 1 subfamily. As to quaternary structure, interacts with the Sec translocase complex via SecD. Specifically interacts with transmembrane segments of nascent integral membrane proteins during membrane integration.

It is found in the cell inner membrane. Its function is as follows. Required for the insertion and/or proper folding and/or complex formation of integral membrane proteins into the membrane. Involved in integration of membrane proteins that insert both dependently and independently of the Sec translocase complex, as well as at least some lipoproteins. Aids folding of multispanning membrane proteins. The polypeptide is Membrane protein insertase YidC (Haemophilus influenzae (strain 86-028NP)).